We begin with the raw amino-acid sequence, 200 residues long: Recombination protein RecR (200 aa).

The C4-type zinc finger occupies 59-74 (CEICGNIDTRSPCTVC). Residues 82–177 (SIIVVVADVA…KVTRLAHGVP (96 aa)) enclose the Toprim domain.

This sequence belongs to the RecR family.

Functionally, may play a role in DNA repair. It seems to be involved in an RecBC-independent recombinational process of DNA repair. It may act with RecF and RecO. In Nitrobacter hamburgensis (strain DSM 10229 / NCIMB 13809 / X14), this protein is Recombination protein RecR.